Reading from the N-terminus, the 762-residue chain is Hyperosmolality-gated Ca2+ permeable channel 2.2 (762 aa).

10 helical membrane-spanning segments follow: residues 3-23 (VSAL…LVSL), 90-110 (MVIC…AFVL), 144-164 (LWVH…LLYF), 354-374 (IATL…VTFV), 402-422 (VITG…VPPL), 445-465 (KILY…GSVI), 500-520 (GWAG…NLIA), 557-577 (VIAP…YLIY), 594-614 (QYWP…QVIA), and 615-635 (LGFF…PLIL).

It belongs to the CSC1 (TC 1.A.17) family.

Its subcellular location is the membrane. Acts as an osmosensitive calcium-permeable cation channel. This chain is Hyperosmolality-gated Ca2+ permeable channel 2.2, found in Arabidopsis thaliana (Mouse-ear cress).